The following is a 481-amino-acid chain: 4-O-methyl-glucuronoyl methylesterase (481 aa).

The N-terminal stretch at 1–21 is a signal peptide; the sequence is MVSQTVVSSLLVVLGAAGVRA. A CBM1 domain is found at 23–59; it reads QRQSLWGQCGGSGWSGPTLCVDGAWCNPQNQWYHQCI. Disulfide bonds link Cys108–Cys143, Cys292–Cys428, and Cys324–Cys400. The GXSYXG catalytic site motif motif lies at 291-296; it reads GCSRNG. Ser293 functions as the Nucleophile in the catalytic mechanism. Substrate contacts are provided by Lys297, Gln339, Glu347, and Trp391. His427 functions as the Proton donor/acceptor in the catalytic mechanism.

It belongs to the carbohydrate esterase 15 (CE15) family.

The protein resides in the secreted. It carries out the reaction a 4-O-methyl-alpha-D-glucuronosyl ester derivative + H2O = 4-O-methyl-alpha-D-glucuronate derivative + an alcohol + H(+). Glucuronoyl esterase which may play a significant role in biomass degradation, as it is considered to disconnect hemicellulose from lignin through the hydrolysis of the ester bond between 4-O-methyl-D-glucuronic acid residues of glucuronoxylans and aromatic alcohols of lignin. This is 4-O-methyl-glucuronoyl methylesterase from Podospora anserina (strain S / ATCC MYA-4624 / DSM 980 / FGSC 10383) (Pleurage anserina).